The following is a 478-amino-acid chain: Serine carboxypeptidase-like 33 (478 aa).

Residues 1-33 (MNLTLPMKKQKFLLIISLLILLSLLHQDYHIEA) form the signal peptide. 3 cysteine pairs are disulfide-bonded: Cys95–Cys361, Cys257–Cys268, and Cys292–Cys330. 2 N-linked (GlcNAc...) asparagine glycosylation sites follow: Asn114 and Asn146. Residue Ser188 is part of the active site. N-linked (GlcNAc...) asparagine glycans are attached at residues Asn263, Asn295, and Asn362. Catalysis depends on residues Asp398 and His451.

The protein belongs to the peptidase S10 family. As to expression, expressed in senescent leaves and flowers.

Its subcellular location is the secreted. Its function is as follows. Probable carboxypeptidase. This Arabidopsis thaliana (Mouse-ear cress) protein is Serine carboxypeptidase-like 33 (SCPL33).